Here is a 398-residue protein sequence, read N- to C-terminus: MTDATAARRNIVILTIAQALGASSPPIVISLGGLVGQKLSSDPALVTLPVSLFNLGLALGTLPAAFFMRQFGRRNAYMLGALVGAAAGVIAAAGIFAASFLIFCLGTLTAGFYASYVQSYRFAATDAATGDMKARAISWVMVGGLVAAIVGPQLVIWTRDTIPDAMFAGSFLSQAVLGLLALPVLFMLRAPKVRKDPNAIHDTGRPLGEILRSPRFILSVAAGVCSYALMTFVMTAAPIAMVGHGHSVDHAALGIQWHVLAMFAPSFFTGKLITRFGKEKITALGLVLIAFSAIIALGGFDVGHFWGALIFLGIGWNFGFIGATAMVTDCHTPAERGKAQGANDFIMFGTVACASFFAGSLLHSSGWETINWLVFPIVALVLVPLILRLKPKGAAAEA.

12 consecutive transmembrane segments (helical) span residues 13 to 35 (ILTI…GGLV), 45 to 67 (LVTL…AAFF), 74 to 91 (RNAY…GVIA), 95 to 117 (IFAA…ASYV), 137 to 156 (ISWV…QLVI), 166 to 188 (MFAG…LFML), 220 to 242 (VAAG…IAMV), 252 to 274 (ALGI…KLIT), 281 to 300 (ITAL…LGGF), 305 to 324 (FWGA…IGAT), 345 to 367 (FIMF…SSGW), and 372 to 389 (WLVF…ILRL).

This sequence belongs to the major facilitator superfamily.

Its subcellular location is the cell membrane. Transports riboflavin into the cell. This Brucella anthropi (strain ATCC 49188 / DSM 6882 / CCUG 24695 / JCM 21032 / LMG 3331 / NBRC 15819 / NCTC 12168 / Alc 37) (Ochrobactrum anthropi) protein is Riboflavin transporter RfnT.